A 434-amino-acid polypeptide reads, in one-letter code: Acyl transferase 15 (434 aa).

Catalysis depends on proton acceptor residues His164 and Asp371.

This sequence belongs to the plant acyltransferase family.

In terms of biological role, involved in the incorporation of ferulate into the cell wall. The chain is Acyl transferase 15 from Oryza sativa subsp. japonica (Rice).